We begin with the raw amino-acid sequence, 244 residues long: Cytochrome c1 (244 aa).

The signal sequence occupies residues 1-19 (MRKLILATFLLLAPTALLA). Heme c contacts are provided by Cys50, Cys53, and His54. Residues 220–240 (YVLLFLGFLFILAYLLKKEYW) traverse the membrane as a helical segment.

The main subunits of complex b-c1 are: cytochrome b, cytochrome c1 and the Rieske protein. Binds 1 heme c group covalently per subunit.

It localises to the cell membrane. Component of the ubiquinol-cytochrome c reductase complex (complex III or cytochrome b-c1 complex), which is a respiratory chain that generates an electrochemical potential coupled to ATP synthesis. c1 functions as an electron donor to cytochrome c. The chain is Cytochrome c1 (petC) from Allochromatium vinosum (strain ATCC 17899 / DSM 180 / NBRC 103801 / NCIMB 10441 / D) (Chromatium vinosum).